Here is a 378-residue protein sequence, read N- to C-terminus: Cysteine synthase (378 aa).

Residues 10–31 (NSEGDSNQQQNNNNNSNNNLKE) are disordered. Low complexity predominate over residues 15 to 28 (SNQQQNNNNNSNNN). Lys-79 carries the N6-(pyridoxal phosphate)lysine modification. Residues 215–219 (GTGGT) and Ser-319 contribute to the pyridoxal 5'-phosphate site.

It belongs to the cysteine synthase/cystathionine beta-synthase family. The cofactor is pyridoxal 5'-phosphate.

The enzyme catalyses O-acetyl-L-serine + hydrogen sulfide = L-cysteine + acetate. It functions in the pathway amino-acid biosynthesis; L-cysteine biosynthesis; L-cysteine from L-serine: step 2/2. The polypeptide is Cysteine synthase (cysK) (Dictyostelium discoideum (Social amoeba)).